A 474-amino-acid polypeptide reads, in one-letter code: MAAPAKRARVSDASPLAAPCPVPRAAARVPLPLPAGPSGHEPESDAVAGFLRWCTRVGLELSPKVLVSRQGTVAGYGMVARESVQPGELLFAVPRSALLSPHTCSISDLLERERGALQSLSGWVPLLLALLHELQAPASPWSPYFALWPELGRLEHPMFWPEEERLRLLKGTGVPEAVEKDLVNIRSEYYSIVLPFMEAHSDLFSPTVRSLELYRQLVALVMAYSFQEPLEEEEDEKEPNSPLMVPAADILNHIANHNANLEYSAEYLRMVATQPILKGHEIFNTYGQMANWQLIHMYGFAEPYPNNTDDTADIQMVAVREAALQGTEDETERLLLCERWDFLCKQELVGEEGAFVIGREEVLTEEELATTLKVLCMPAEEFRDYKERAGWGEEETEDGSLAITNIPKLQESWKRLLRDSVLLTLQTYATDLKTEQDLLSNKEVYAKLSWREQQALQVRYGQKMILHRLLELTS.

Ser14 carries the post-translational modification Phosphoserine. The SET domain maps to 63 to 287; it reads PKVLVSRQGT…KGHEIFNTYG (225 aa). N6-methylated lysine; by autocatalysis is present on Lys64. 74 to 76 contributes to the S-adenosyl-L-methionine binding site; it reads AGY. Trp123 lines the substrate pocket. Lys180 carries the post-translational modification N6-methylated lysine; by autocatalysis. Tyr224 is a binding site for S-adenosyl-L-methionine. Substrate is bound by residues Ser225 and Gln227. S-adenosyl-L-methionine is bound by residues 252 to 253 and Tyr298; that span reads NH. Lys373 is modified (N6-methylated lysine; by autocatalysis).

Belongs to the class V-like SAM-binding methyltransferase superfamily. Histone-lysine methyltransferase family. SETD6 subfamily. In terms of assembly, monomer, homodimer and homotrimer; these structures are stabilized in the presence of S-adenosyl-L-methionine (SAM). Post-translationally, automethylated.

The protein localises to the nucleus. It catalyses the reaction L-lysyl-[protein] + S-adenosyl-L-methionine = N(6)-methyl-L-lysyl-[protein] + S-adenosyl-L-homocysteine + H(+). It carries out the reaction L-lysyl(8)-[histone H2AZ] + S-adenosyl-L-methionine = N(6)-methyl-L-lysyl(8)-[histone H2AZ] + S-adenosyl-L-homocysteine + H(+). Functionally, protein-lysine N-methyltransferase. Monomethylates 'Lys-310' of the RELA subunit of NF-kappa-B complex, leading to down-regulation of NF-kappa-B transcription factor activity. Monomethylates 'Lys-8' of H2AZ (H2AZK8me1). Required for the maintenance of embryonic stem cell self-renewal. Methylates PAK4. The chain is N-lysine methyltransferase SETD6 (Setd6) from Rattus norvegicus (Rat).